We begin with the raw amino-acid sequence, 271 residues long: Phosphatidylinositol transfer protein beta isoform (271 aa).

Lysine 215 is modified (N6-acetyllysine). A Phosphoserine modification is found at serine 262.

This sequence belongs to the PtdIns transfer protein family. PI transfer class I subfamily. Post-translationally, constitutive phosphorylation of Ser-262 has no effect on phospholipid transfer activity but is required for Golgi targeting. As to expression, widely expressed in various tissues including brain.

It localises to the golgi apparatus. Its subcellular location is the golgi apparatus membrane. The protein localises to the endoplasmic reticulum membrane. The catalysed reaction is a 1,2-diacyl-sn-glycero-3-phosphocholine(in) = a 1,2-diacyl-sn-glycero-3-phosphocholine(out). It carries out the reaction a 1,2-diacyl-sn-glycero-3-phospho-(1D-myo-inositol)(in) = a 1,2-diacyl-sn-glycero-3-phospho-(1D-myo-inositol)(out). The enzyme catalyses an N-(acyl)-sphingosylphosphocholine(in) = an N-(acyl)-sphingosylphosphocholine(out). With respect to regulation, phosphatidylinositol transfer activity is inhibited by N-ethylmaleimide. Catalyzes the transfer of phosphatidylinositol and phosphatidylcholine between membranes. Also catalyzes the transfer of sphingomyelin. Required for COPI-mediated retrograde transport from the Golgi to the endoplasmic reticulum; phosphatidylinositol and phosphatidylcholine transfer activity is essential for this function. The chain is Phosphatidylinositol transfer protein beta isoform (PITPNB) from Homo sapiens (Human).